Reading from the N-terminus, the 485-residue chain is MWENKFQKEGLTFDDVLLVPAKSEVLPRDVSVKTKLTETLQLNIPIISAGMDTVTEAKMAIAIAREGGLGIIHKNMSVEEQAEQVDRVKRSESGVITNPFFLTPDRQVFDAEHLMGKYRISGVPIVDEDQKLVGILTNRDLRFIEDYSTLIDDVMTKENLVTAPVGTTLKEAEEILQKHKIEKLPLVDESGTLKGLITIKDIEKVIEFPNSAKDSQGRLIVGAAVGVSADTDVRVAALVEAGVDVIVIDTAHGHSKGVLEKVKAIREQYPDLTIIAGNVATAEATRDLIEAGANVVKVGIGPGSICTTRIVAGIGVPQITAVYDCANEARKHGVPIIADGGIKYSGDIVKALAAGGHAVMLGSLLAGVSESPGEREIFQGRQFKVYRGMGSLGAMEKGSKDRYFQENNQKLVPEGIEGRIPYKGPLHDTIHQLVGGIRAGMGYCGTKTIDELRENTQFIRITGAGLRESHPHDVQITKEAPNYTL.

2 CBS domains span residues 95–154 and 155–215; these read VITN…IDDV and MTKE…AKDS. NAD(+) contacts are provided by residues Asp249 and 299 to 301; that span reads GIG. 2 residues coordinate K(+): Gly301 and Gly303. Ser304 provides a ligand contact to IMP. Residue Cys306 coordinates K(+). Cys306 (thioimidate intermediate) is an active-site residue. Residues 339-341, 362-363, and 386-390 contribute to the IMP site; these read DGG, GS, and YRGMG. Residue Arg402 is the Proton acceptor of the active site. Glu414 serves as a coordination point for IMP. K(+) contacts are provided by Glu468, Ser469, and His470.

Belongs to the IMPDH/GMPR family. As to quaternary structure, homotetramer. K(+) is required as a cofactor.

The enzyme catalyses IMP + NAD(+) + H2O = XMP + NADH + H(+). The protein operates within purine metabolism; XMP biosynthesis via de novo pathway; XMP from IMP: step 1/1. Mycophenolic acid (MPA) is a non-competitive inhibitor that prevents formation of the closed enzyme conformation by binding to the same site as the amobile flap. In contrast, mizoribine monophosphate (MZP) is a competitive inhibitor that induces the closed conformation. MPA is a potent inhibitor of mammalian IMPDHs but a poor inhibitor of the bacterial enzymes. MZP is a more potent inhibitor of bacterial IMPDH. Functionally, catalyzes the conversion of inosine 5'-phosphate (IMP) to xanthosine 5'-phosphate (XMP), the first committed and rate-limiting step in the de novo synthesis of guanine nucleotides, and therefore plays an important role in the regulation of cell growth. The polypeptide is Inosine-5'-monophosphate dehydrogenase (Halalkalibacterium halodurans (strain ATCC BAA-125 / DSM 18197 / FERM 7344 / JCM 9153 / C-125) (Bacillus halodurans)).